A 504-amino-acid chain; its full sequence is L-amino-acid oxidase (504 aa).

Positions 1–18 (MNIFFMFSLLFLATLGSC) are cleaved as a signal peptide. Cys-28 and Cys-191 are joined by a disulfide. FAD is bound by residues 61–62 (MS), 81–82 (EA), Arg-89, and 105–108 (GPMR). Arg-108 provides a ligand contact to substrate. Asn-190 carries an N-linked (GlcNAc...) asparagine glycan. His-241 serves as a coordination point for substrate. An FAD-binding site is contributed by Val-279. Cys-349 and Cys-430 form a disulfide bridge. Asn-379 carries an N-linked (GlcNAc...) asparagine glycan. Tyr-390 is a substrate binding site. Residues Glu-475 and 482–487 (GWIDST) each bind FAD. 482-483 (GW) contributes to the substrate binding site.

This sequence belongs to the flavin monoamine oxidase family. FIG1 subfamily. As to quaternary structure, homodimer; non-covalently linked. The cofactor is FAD. As to expression, expressed by the venom gland.

It is found in the secreted. It catalyses the reaction an L-alpha-amino acid + O2 + H2O = a 2-oxocarboxylate + H2O2 + NH4(+). Functionally, catalyzes an oxidative deamination of predominantly hydrophobic and aromatic L-amino acids, thus producing hydrogen peroxide that may contribute to the diverse toxic effects of this enzyme. Exhibits diverse biological activities, such as hemorrhage, hemolysis, edema, apoptosis of vascular endothelial cells or tumor cell lines, antibacterial and antiparasitic activities, as well as regulation of platelet aggregation. Its effect on platelets is controversial, since it either induces aggregation or inhibits agonist-induced aggregation. These different effects are probably due to different experimental conditions. The protein is L-amino-acid oxidase of Echis ocellatus (Ocellated saw-scaled viper).